Reading from the N-terminus, the 274-residue chain is Cytochrome b-c1 complex subunit Rieske, mitochondrial (274 aa).

Residues 79 to 103 (SHTDVKVPDFSEYRRLEVLDSTKSS) lie on the Mitochondrial matrix side of the membrane. A helical transmembrane segment spans residues 104–140 (RESSEARKGFSYLVTGVTTVGVAYAAKNAVTQFVSSM). Residues 141–274 (SASADVLALA…FTSDDMVIVG (134 aa)) lie on the Mitochondrial intermembrane side of the membrane. The 86-residue stretch at 187–272 (EAAVELSQLR…YEFTSDDMVI (86 aa)) folds into the Rieske domain. The [2Fe-2S] cluster site is built by cysteine 217, histidine 219, cysteine 236, histidine 239, and serine 241. Residues cysteine 222 and cysteine 238 are joined by a disulfide bond.

The protein belongs to the Rieske iron-sulfur protein family. Component of the ubiquinol-cytochrome c oxidoreductase (cytochrome b-c1 complex, complex III, CIII), a multisubunit enzyme composed of 11 subunits. The complex is composed of 3 respiratory subunits cytochrome b, cytochrome c1 and Rieske protein UQCRFS1, 2 core protein subunits UQCRC1/QCR1 and UQCRC2/QCR2, and 6 low-molecular weight protein subunits UQCRH/QCR6, UQCRB/QCR7, UQCRQ/QCR8, UQCR10/QCR9, UQCR11/QCR10 and subunit 9, the cleavage product of Rieske protein UQCRFS1. The complex exists as an obligatory dimer and forms supercomplexes (SCs) in the inner mitochondrial membrane with NADH-ubiquinone oxidoreductase (complex I, CI) and cytochrome c oxidase (complex IV, CIV), resulting in different assemblies (supercomplex SCI(1)III(2)IV(1) and megacomplex MCI(2)III(2)IV(2)). Incorporation of the Rieske protein UQCRFS1 is the penultimate step in complex III assembly. Interacts with TTC19, which is involved in the clearance of UQCRFS1 fragments. As to quaternary structure, component of the ubiquinol-cytochrome c oxidoreductase (cytochrome b-c1 complex, complex III, CIII). Subunit 9 corresponds to the mitochondrial targeting sequence (MTS) of Rieske protein UQCRFS1. It is retained after processing and incorporated inside complex III, where it remains bound to the complex and localizes between the 2 core subunits UQCRC1/QCR1 and UQCRC2/QCR2. [2Fe-2S] cluster is required as a cofactor. Proteolytic processing is necessary for the correct insertion of UQCRFS1 in the complex III dimer. Several fragments are generated during UQCRFS1 insertion, most probably due to the endogenous matrix-processing peptidase (MPP) activity of the 2 core protein subunits UQCRC1/QCR1 and UQCRC2/QCR2, which are homologous to the 2 mitochondrial-processing peptidase (MPP) subunits beta-MPP and alpha-MPP respectively. The action of the protease is also necessary for the clearance of the UQCRFS1 fragments.

The protein resides in the mitochondrion inner membrane. It catalyses the reaction a quinol + 2 Fe(III)-[cytochrome c](out) = a quinone + 2 Fe(II)-[cytochrome c](out) + 2 H(+)(out). Its function is as follows. Component of the ubiquinol-cytochrome c oxidoreductase, a multisubunit transmembrane complex that is part of the mitochondrial electron transport chain which drives oxidative phosphorylation. The respiratory chain contains 3 multisubunit complexes succinate dehydrogenase (complex II, CII), ubiquinol-cytochrome c oxidoreductase (cytochrome b-c1 complex, complex III, CIII) and cytochrome c oxidase (complex IV, CIV), that cooperate to transfer electrons derived from NADH and succinate to molecular oxygen, creating an electrochemical gradient over the inner membrane that drives transmembrane transport and the ATP synthase. The cytochrome b-c1 complex catalyzes electron transfer from ubiquinol to cytochrome c, linking this redox reaction to translocation of protons across the mitochondrial inner membrane, with protons being carried across the membrane as hydrogens on the quinol. In the process called Q cycle, 2 protons are consumed from the matrix, 4 protons are released into the intermembrane space and 2 electrons are passed to cytochrome c. The Rieske protein is a catalytic core subunit containing a [2Fe-2S] iron-sulfur cluster. It cycles between 2 conformational states during catalysis to transfer electrons from the quinol bound in the Q(0) site in cytochrome b to cytochrome c1. Incorporation of UQCRFS1 is the penultimate step in complex III assembly. Component of the ubiquinol-cytochrome c oxidoreductase (cytochrome b-c1 complex, complex III, CIII). UQCRFS1 undergoes proteolytic processing once it is incorporated in the complex III dimer. One of the fragments, called subunit 9, corresponds to its mitochondrial targeting sequence (MTS). The proteolytic processing is necessary for the correct insertion of UQCRFS1 in the complex III dimer, but the persistence of UQCRFS1-derived fragments may prevent newly imported UQCRFS1 to be processed and assembled into complex III and is detrimental for the complex III structure and function. This chain is Cytochrome b-c1 complex subunit Rieske, mitochondrial (UQCRFS1), found in Pan paniscus (Pygmy chimpanzee).